We begin with the raw amino-acid sequence, 186 residues long: Ribosome rescue factor SmrB (186 aa).

One can recognise a Smr domain in the interval 99 to 174; sequence IDLHGLTQHQ…SDAAIIVIIE (76 aa).

It belongs to the SmrB family. Associates with collided ribosomes, but not with correctly translating polysomes.

Acts as a ribosome collision sensor. Detects stalled/collided disomes (pairs of ribosomes where the leading ribosome is stalled and a second ribosome has collided with it) and endonucleolytically cleaves mRNA at the 5' boundary of the stalled ribosome. Stalled/collided disomes form a new interface (primarily via the 30S subunits) that binds SmrB. Cleaved mRNA becomes available for tmRNA ligation, leading to ribosomal subunit dissociation and rescue of stalled ribosomes. This Buchnera aphidicola subsp. Acyrthosiphon pisum (strain 5A) protein is Ribosome rescue factor SmrB.